Reading from the N-terminus, the 257-residue chain is Homeobox protein goosecoid (257 aa).

Positions 160–219 (KRRHRTIFTDEQLEALENLFQETKYPDVGTREQLARKVHLREEKVEVWFKNRRAKWRRQK) form a DNA-binding region, homeobox. Residues 213-257 (AKWRRQKRSSSEESENAEKWNKTSSSKASPEKREEEGKSDLDSDS) form a disordered region. Positions 241–257 (SPEKREEEGKSDLDSDS) are enriched in basic and acidic residues.

This sequence belongs to the paired homeobox family. Bicoid subfamily.

The protein localises to the nucleus. Its function is as follows. Regulates chordin (CHRD). May play a role in spatial programing within discrete embryonic fields or lineage compartments during organogenesis. In concert with NKX3-2, plays a role in defining the structural components of the middle ear; required for the development of the entire tympanic ring. Probably involved in the regulatory networks that define neural crest cell fate specification and determine mesoderm cell lineages in mammals. The polypeptide is Homeobox protein goosecoid (GSC) (Saguinus labiatus (Red-chested mustached tamarin)).